Consider the following 134-residue polypeptide: Putative transposase InsN for insertion sequence element IS911A (134 aa).

Belongs to the transposase 8 family.

Its function is as follows. Involved in the transposition of the insertion sequence IS911. The protein is Putative transposase InsN for insertion sequence element IS911A (insN1) of Escherichia coli (strain K12).